Here is a 283-residue protein sequence, read N- to C-terminus: MMRIGIIARFDVAEAVEIAERVASFLLNRGVEITVDLKLTEELPQLREYGEDIRNMDADMILTIGGDGTILRTRSLIEDKEIPILGINMGTVGFLTEVDPENVFSALEAVLRGEYAVEKRTLLSVYHNDELPSALNEVVLMTRRPAKMLHIEISVDDEVVEELRADGIIIATPSGSTAYSMSAGGPIVDPRVEAFLIVPICPFKLSARPLVVSNKSVIRVKLLRKGKKAIAVIDGQYEEEINHMDEVIFRKSERKAHFVRLSKDFYRKVREKLIEGGIDSIKG.

D67 acts as the Proton acceptor in catalysis. Residues 67–68 (DG), R72, 136–137 (NE), K147, R164, D166, 177–182 (TAYSMS), and Q236 contribute to the NAD(+) site.

This sequence belongs to the NAD kinase family. It depends on a divalent metal cation as a cofactor.

The protein localises to the cytoplasm. The enzyme catalyses NAD(+) + ATP = ADP + NADP(+) + H(+). Functionally, involved in the regulation of the intracellular balance of NAD and NADP, and is a key enzyme in the biosynthesis of NADP. Catalyzes specifically the phosphorylation on 2'-hydroxyl of the adenosine moiety of NAD to yield NADP. The protein is NAD kinase of Methanothermobacter thermautotrophicus (strain ATCC 29096 / DSM 1053 / JCM 10044 / NBRC 100330 / Delta H) (Methanobacterium thermoautotrophicum).